A 207-amino-acid chain; its full sequence is Outer-membrane lipoprotein LolB (207 aa).

The first 21 residues, 1-21, serve as a signal peptide directing secretion; that stretch reads MPLPDFRLIRLLPLASLVLTA. A lipid anchor (N-palmitoyl cysteine) is attached at Cys22. Residue Cys22 is the site of S-diacylglycerol cysteine attachment.

Belongs to the LolB family. In terms of assembly, monomer.

The protein localises to the cell outer membrane. Functionally, plays a critical role in the incorporation of lipoproteins in the outer membrane after they are released by the LolA protein. This Escherichia fergusonii (strain ATCC 35469 / DSM 13698 / CCUG 18766 / IAM 14443 / JCM 21226 / LMG 7866 / NBRC 102419 / NCTC 12128 / CDC 0568-73) protein is Outer-membrane lipoprotein LolB.